Reading from the N-terminus, the 395-residue chain is S-adenosylmethionine synthase (395 aa).

Residue E10 participates in Mg(2+) binding. H16 serves as a coordination point for ATP. E44 is a K(+) binding site. L-methionine is bound by residues E57 and Q100. ATP contacts are provided by residues 168–170 (DGK), 236–239 (SGRF), 253–254 (RK), A270, K274, and K278. L-methionine is bound at residue K278.

Belongs to the AdoMet synthase family. As to quaternary structure, homotetramer. Mn(2+) is required as a cofactor. It depends on Mg(2+) as a cofactor. The cofactor is Co(2+). Requires K(+) as cofactor.

The protein resides in the cytoplasm. The catalysed reaction is L-methionine + ATP + H2O = S-adenosyl-L-methionine + phosphate + diphosphate. Its pathway is amino-acid biosynthesis; S-adenosyl-L-methionine biosynthesis; S-adenosyl-L-methionine from L-methionine: step 1/1. Functionally, catalyzes the formation of S-adenosylmethionine from methionine and ATP. The reaction comprises two steps that are both catalyzed by the same enzyme: formation of S-adenosylmethionine (AdoMet) and triphosphate, and subsequent hydrolysis of the triphosphate. In Populus deltoides (Eastern poplar), this protein is S-adenosylmethionine synthase (METK).